A 275-amino-acid chain; its full sequence is Shikimate dehydrogenase (NADP(+)) (275 aa).

Residues 17-19 and threonine 64 contribute to the shikimate site; that span reads SKS. Catalysis depends on lysine 68, which acts as the Proton acceptor. Glutamate 80 serves as a coordination point for NADP(+). Positions 89 and 105 each coordinate shikimate. NADP(+) is bound by residues 129-133, 152-157, and methionine 216; these read GAGGA and NRTFFK. Tyrosine 218 lines the shikimate pocket. Residue glycine 240 participates in NADP(+) binding.

It belongs to the shikimate dehydrogenase family. As to quaternary structure, homodimer.

The enzyme catalyses shikimate + NADP(+) = 3-dehydroshikimate + NADPH + H(+). It functions in the pathway metabolic intermediate biosynthesis; chorismate biosynthesis; chorismate from D-erythrose 4-phosphate and phosphoenolpyruvate: step 4/7. Functionally, involved in the biosynthesis of the chorismate, which leads to the biosynthesis of aromatic amino acids. Catalyzes the reversible NADPH linked reduction of 3-dehydroshikimate (DHSA) to yield shikimate (SA). The chain is Shikimate dehydrogenase (NADP(+)) from Pectobacterium atrosepticum (strain SCRI 1043 / ATCC BAA-672) (Erwinia carotovora subsp. atroseptica).